The chain runs to 1543 residues: ATP-binding cassette sub-family A member 10 (1543 aa).

7 consecutive transmembrane segments (helical) span residues Tyr83–Thr103, Trp135–Val155, Ile185–Val205, Phe210–Leu230, Leu240–Leu260, Leu264–Met284, and Ile310–Phe330. The 236-residue stretch at Ile391–His626 folds into the ABC transporter 1 domain. ATP is bound at residue Gly427–Ser434. The next 8 helical transmembrane spans lie at Leu774–Met794, Leu890–Phe910, Ile926–Val946, Ile985–Gly1005, Phe1014–Leu1034, Gly1046–Thr1066, Leu1073–Ile1093, and Lys1113–Ile1133. Basic and acidic residues predominate over residues Ile1153–Pro1164. Positions Ile1153–Glu1177 are disordered. Residues Glu1165–Val1174 show a composition bias toward acidic residues. In terms of domain architecture, ABC transporter 2 spans Tyr1206–Lys1440. ATP is bound at residue Gly1239 to Ser1246.

It belongs to the ABC transporter superfamily. ABCA family. In terms of tissue distribution, widely expressed. Highly expressed in skeletal muscle, heart, brain and gastrointestinal tract.

It is found in the membrane. Functionally, probable transporter which may play a role in macrophage lipid transport and homeostasis. This chain is ATP-binding cassette sub-family A member 10 (ABCA10), found in Homo sapiens (Human).